The primary structure comprises 139 residues: U6 snRNA-associated Sm-like protein LSm4 (139 aa).

Met1 carries the post-translational modification N-acetylmethionine. Residues 2–75 form the Sm domain; sequence LPLSLLKTAQ…IKYLRIPDEI (74 aa). Lys80 participates in a covalent cross-link: Glycyl lysine isopeptide (Lys-Gly) (interchain with G-Cter in SUMO2). A disordered region spans residues 87-139; it reads GRGRGGLQQQKQQKGRGMGGAGRGVFGGRGRGGIPGTGRGQPEKKPGRQAGKQ. Positions 102–125 are enriched in gly residues; it reads RGMGGAGRGVFGGRGRGGIPGTGR.

The protein belongs to the snRNP Sm proteins family. Component of the precatalytic spliceosome (spliceosome B complex). Component of the U4/U6-U5 tri-snRNP complex, a building block of the precatalytic spliceosome (spliceosome B complex). The U4/U6-U5 tri-snRNP complex is composed of the U4, U6 and U5 snRNAs and at least PRPF3, PRPF4, PRPF6, PRPF8, PRPF31, SNRNP200, TXNL4A, SNRNP40, SNRPB, SNRPD1, SNRPD2, SNRPD3, SNRPE, SNRPF, SNRPG, DDX23, CD2BP2, PPIH, SNU13, EFTUD2, SART1 and USP39, plus LSM2, LSM3, LSM4, LSM5, LSM6, LSM7 and LSM8. LSM2, LSM3, LSM4, LSM5, LSM6, LSM7 and LSM8 form a heptameric, ring-shaped subcomplex (the LSM2-8 complex) that is part of the U4/U6-U5 tri-snRNP complex and the precatalytic spliceosome.

Its subcellular location is the nucleus. Plays a role in pre-mRNA splicing as component of the U4/U6-U5 tri-snRNP complex that is involved in spliceosome assembly, and as component of the precatalytic spliceosome (spliceosome B complex). The heptameric LSM2-8 complex binds specifically to the 3'-terminal U-tract of U6 snRNA. The chain is U6 snRNA-associated Sm-like protein LSm4 (LSM4) from Bos taurus (Bovine).